The primary structure comprises 662 residues: Sodium/glucose cotransporter 1 (662 aa).

The Extracellular segment spans residues 1-24; that stretch reads MDSSTLSPLTTSTAAPLESYERIR. The helical transmembrane segment at 25-47 threads the bilayer; it reads NAADISVIVIYFLVVMAVGLWAM. Over 48 to 66 the chain is Cytoplasmic; that stretch reads FSTNRGTVGGFFLAGRSMV. The chain crosses the membrane as a helical span at residues 67–90; sequence WWPIGASLFASNIGSGHFVGLAGT. At 91 to 95 the chain is on the extracellular side; sequence GAASG. A helical membrane pass occupies residues 96 to 117; sequence IATGGFEWNALIMVVVLGWVFV. The Cytoplasmic portion of the chain corresponds to 118–139; it reads PIYIRAGVVTMPEYLQKRFGGK. Residues 140-169 traverse the membrane as a helical segment; it reads RIQIYLSILSLLLYIFTKISADIFSGAIFI. Topologically, residues 170 to 176 are extracellular; it reads QLTLGLD. The chain crosses the membrane as a helical span at residues 177 to 193; the sequence is IYVAIIILLVITGLYTI. Topologically, residues 194 to 202 are cytoplasmic; sequence TGGLAAVIY. The chain crosses the membrane as a helical span at residues 203 to 221; the sequence is TDTLQTAIMMVGSVILTGF. Residues 222–275 are Extracellular-facing; that stretch reads AFHEVGGYEAFTEKYMRAIPSQISYGNTSIPQKCYTPREDAFHIFRDAITGDIP. An N-linked (GlcNAc...) asparagine glycan is attached at Asn-248. Disulfide bonds link Cys-255-Cys-511, Cys-255-Cys-608, Cys-345-Cys-351, Cys-355-Cys-361, and Cys-517-Cys-522. Residues 276–295 traverse the membrane as a helical segment; the sequence is WPGLVFGMSILTLWYWCTDQ. Topologically, residues 296-309 are cytoplasmic; sequence VIVQRCLSAKNLSH. A helical transmembrane segment spans residues 310–331; that stretch reads VKAGCILCGYLKVMPMFLIVMM. Residues 332–375 lie on the Extracellular side of the membrane; sequence GMVSRILYTDKVACVVPSECERYCGTRVGCTNIAFPTLVVELMP. Residues 376–406 form a helical membrane-spanning segment; the sequence is NGLRGLMLSVMMASLMSSLTSIFNSASTLFT. Topologically, residues 407–422 are cytoplasmic; it reads MDIYTKIRKKASEKEL. The helical transmembrane segment at 423-444 threads the bilayer; the sequence is MIAGRLFMLFLIGISIAWVPIV. The Extracellular portion of the chain corresponds to 445–451; the sequence is QSAQSGQ. A helical membrane pass occupies residues 452 to 477; the sequence is LFDYIQSITSYLGPPIAAVFLLAIFW. D-glucose is bound at residue Gln-457. Over 478–481 the chain is Cytoplasmic; the sequence is KRVN. Residues 482–504 traverse the membrane as a helical segment; the sequence is EPGAFWGLVLGFLIGISRMITEF. The Extracellular segment spans residues 505–525; the sequence is AYGTGSCMEPSNCPTIICGVH. The helical transmembrane segment at 526 to 547 threads the bilayer; the sequence is YLYFAIILFVISIITVVVVSLF. The Cytoplasmic segment spans residues 548-642; sequence TKPIPDVHLY…TSEHPLWRTV (95 aa). A helical transmembrane segment spans residues 643-660; it reads VNINGVILLAVAVFCYAY. Residues 661 to 662 lie on the Extracellular side of the membrane; the sequence is FA.

This sequence belongs to the sodium:solute symporter (SSF) (TC 2.A.21) family. Post-translationally, N-glycosylation is not necessary for the cotransporter function. As to expression, found predominantly in intestine, renal cortex and in outer renal medulla.

The protein resides in the apical cell membrane. It catalyses the reaction D-glucose(out) + 2 Na(+)(out) = D-glucose(in) + 2 Na(+)(in). The enzyme catalyses D-galactose(out) + 2 Na(+)(out) = D-galactose(in) + 2 Na(+)(in). Enhanced by the interaction with PDZK1IP1/MAP17; but unlike SLC5A2/SGLT2, PDZK1IP1 is not essential for SLC5A1 transporter activity. Possibly modulated by cholesterol binding. In terms of biological role, electrogenic Na(+)-coupled sugar symporter that actively transports D-glucose or D-galactose at the plasma membrane, with a Na(+) to sugar coupling ratio of 2:1. Transporter activity is driven by a transmembrane Na(+) electrochemical gradient set by the Na(+)/K(+) pump. Has a primary role in the transport of dietary monosaccharides from enterocytes to blood. Responsible for the absorption of D-glucose or D-galactose across the apical brush-border membrane of enterocytes, whereas basolateral exit is provided by GLUT2. Additionally, functions as a D-glucose sensor in enteroendocrine cells, triggering the secretion of the incretins GCG and GIP that control food intake and energy homeostasis. Together with SGLT2, functions in reabsorption of D-glucose from glomerular filtrate, playing a nonredundant role in the S3 segment of the proximal tubules. Transports D-glucose into endometrial epithelial cells, controlling glycogen synthesis and nutritional support for the embryo as well as the decidual transformation of endometrium prior to conception. Acts as a water channel enabling passive water transport in response to the osmotic gradient created upon sugar and Na(+) uptake. Has high water conductivity comparable to aquaporins and therefore is expected to play an important role in transepithelial water permeability, especially in the small intestine. This Oryctolagus cuniculus (Rabbit) protein is Sodium/glucose cotransporter 1 (SLC5A1).